Reading from the N-terminus, the 666-residue chain is Adenylylsulfate reductase subunit alpha (666 aa).

FAD contacts are provided by residues 32–35 (GGMG), 60–61 (DK), 67–69 (SGA), N78, I193, S259, S417, 461–462 (AD), and S472.

Belongs to the FAD-dependent oxidoreductase 2 family. Heterodimer composed of AprA and AprB. The heterodimers can dimerize to form heterotetramers. It depends on FAD as a cofactor.

The protein localises to the cytoplasm. It catalyses the reaction sulfite + A + AMP + 2 H(+) = adenosine 5'-phosphosulfate + AH2. In terms of biological role, catalytic subunit of the adenylylsulfate reductase which catalyzes reversibly the reduction of adenosine 5'-phosphosulfate (APS) to sulfite and AMP during dissimilatory sulfate reduction. The chain is Adenylylsulfate reductase subunit alpha from Megalodesulfovibrio gigas (strain ATCC 19364 / DSM 1382 / NCIMB 9332 / VKM B-1759) (Desulfovibrio gigas).